A 533-amino-acid polypeptide reads, in one-letter code: 2-isopropylmalate synthase (533 aa).

The region spanning 8-269 is the Pyruvate carboxyltransferase domain; the sequence is ILIFDTTLRD…YFNPFLGRPA (262 aa). The Mn(2+) site is built by Asp17, His208, His210, and Asn244. Residues 408-533 form a regulatory domain region; sequence RLERVQVSCG…REHPPVVASL (126 aa).

Belongs to the alpha-IPM synthase/homocitrate synthase family. LeuA type 1 subfamily. Homodimer. The cofactor is Mn(2+).

The protein resides in the cytoplasm. The enzyme catalyses 3-methyl-2-oxobutanoate + acetyl-CoA + H2O = (2S)-2-isopropylmalate + CoA + H(+). Its pathway is amino-acid biosynthesis; L-leucine biosynthesis; L-leucine from 3-methyl-2-oxobutanoate: step 1/4. In terms of biological role, catalyzes the condensation of the acetyl group of acetyl-CoA with 3-methyl-2-oxobutanoate (2-ketoisovalerate) to form 3-carboxy-3-hydroxy-4-methylpentanoate (2-isopropylmalate). This chain is 2-isopropylmalate synthase, found in Synechocystis sp. (strain ATCC 27184 / PCC 6803 / Kazusa).